A 336-amino-acid chain; its full sequence is dTDP-glucose 4,6-dehydratase (336 aa).

NAD(+) contacts are provided by residues 7–13 (GGAGFIG), 37–40 (DKLT), and 63–64 (DI). Substrate is bound at residue threonine 87. Position 102 (threonine 102) interacts with NAD(+). 127–129 (TDE) serves as a coordination point for substrate. The Proton donor role is filled by aspartate 128. Active-site proton acceptor residues include glutamate 129 and tyrosine 151. 151–155 (YAAAK) lines the NAD(+) pocket. Asparagine 180 lines the substrate pocket. Asparagine 181 contacts NAD(+). Substrate contacts are provided by residues 190 to 191 (KL), 206 to 208 (PVY), arginine 215, asparagine 250, and 274 to 277 (RPGH).

This sequence belongs to the NAD(P)-dependent epimerase/dehydratase family. dTDP-glucose dehydratase subfamily. In terms of assembly, homodimer. NAD(+) serves as cofactor.

It catalyses the reaction dTDP-alpha-D-glucose = dTDP-4-dehydro-6-deoxy-alpha-D-glucose + H2O. Its pathway is antibiotic biosynthesis; novobiocin biosynthesis. Its function is as follows. dTDP-glucose 4,6-dehydratase involved in the generation of the deoxysugar in the novobiocin biosynthesis pathway, an aminocoumarin family antibiotic that targets bacterial DNA gyrases. This is dTDP-glucose 4,6-dehydratase (novT) from Streptomyces niveus (Streptomyces spheroides).